The sequence spans 205 residues: ATP phosphoribosyltransferase (205 aa).

It belongs to the ATP phosphoribosyltransferase family. Short subfamily. Heteromultimer composed of HisG and HisZ subunits.

The protein localises to the cytoplasm. The catalysed reaction is 1-(5-phospho-beta-D-ribosyl)-ATP + diphosphate = 5-phospho-alpha-D-ribose 1-diphosphate + ATP. It functions in the pathway amino-acid biosynthesis; L-histidine biosynthesis; L-histidine from 5-phospho-alpha-D-ribose 1-diphosphate: step 1/9. Its function is as follows. Catalyzes the condensation of ATP and 5-phosphoribose 1-diphosphate to form N'-(5'-phosphoribosyl)-ATP (PR-ATP). Has a crucial role in the pathway because the rate of histidine biosynthesis seems to be controlled primarily by regulation of HisG enzymatic activity. This Ruthia magnifica subsp. Calyptogena magnifica protein is ATP phosphoribosyltransferase.